The primary structure comprises 637 residues: Chaperone protein HtpG (637 aa).

Residues 1–345 are a; substrate-binding; sequence MSQQETHGFQ…SNDLPLNVSR (345 aa). Positions 346 to 562 are b; the sequence is EILQDNHITK…EGEMSTQMIK (217 aa). The segment at 563 to 637 is c; it reads LMQAAGQPVP…MNQMLLANMK (75 aa).

This sequence belongs to the heat shock protein 90 family. In terms of assembly, homodimer.

It localises to the cytoplasm. Functionally, molecular chaperone. Has ATPase activity. The sequence is that of Chaperone protein HtpG from Shewanella putrefaciens (strain CN-32 / ATCC BAA-453).